A 533-amino-acid polypeptide reads, in one-letter code: Probable bifunctional tRNA threonylcarbamoyladenosine biosynthesis protein (533 aa).

The tract at residues 1–328 (MRILGIEGTA…FRPDAVTVTW (328 aa)) is kae1. The Fe cation site is built by His112 and His116. L-threonylcarbamoyladenylate contacts are provided by residues 133–137 (NASGA), Asp165, Gly178, Glu182, and Asn261. Asp289 contributes to the Fe cation binding site. Positions 339 to 533 (PATLDKTPVR…RDIESRGRYH (195 aa)) constitute a Protein kinase domain. ATP contacts are provided by residues 347–354 (VRGAEAIV) and Lys363. The active-site Proton acceptor; for kinase activity is the Asp452.

This sequence in the N-terminal section; belongs to the KAE1 / TsaD family. It in the C-terminal section; belongs to the protein kinase superfamily. Tyr protein kinase family. BUD32 subfamily. Component of the KEOPS complex that consists of Kae1, Bud32, Cgi121 and Pcc1; the whole complex dimerizes. Requires Fe(2+) as cofactor.

It is found in the cytoplasm. It carries out the reaction L-seryl-[protein] + ATP = O-phospho-L-seryl-[protein] + ADP + H(+). It catalyses the reaction L-threonyl-[protein] + ATP = O-phospho-L-threonyl-[protein] + ADP + H(+). The catalysed reaction is L-threonylcarbamoyladenylate + adenosine(37) in tRNA = N(6)-L-threonylcarbamoyladenosine(37) in tRNA + AMP + H(+). In terms of biological role, required for the formation of a threonylcarbamoyl group on adenosine at position 37 (t(6)A37) in tRNAs that read codons beginning with adenine. Is a component of the KEOPS complex that is probably involved in the transfer of the threonylcarbamoyl moiety of threonylcarbamoyl-AMP (TC-AMP) to the N6 group of A37. The Kae1 domain likely plays a direct catalytic role in this reaction. The Bud32 domain probably displays kinase activity that regulates Kae1 function. This is Probable bifunctional tRNA threonylcarbamoyladenosine biosynthesis protein from Haloquadratum walsbyi (strain DSM 16790 / HBSQ001).